A 126-amino-acid polypeptide reads, in one-letter code: MAVPNELKYSKEHEWVKVEGNVATIGITEYAQSELGDIVFVELPETDDEINEGDTFGSVESVKTVSELYAPISGKVVEVNEELEDSPEFVNESPYEKAWMVKVEISDESQIEALLTAEKYSEMIGE.

In terms of domain architecture, Lipoyl-binding spans 22–104; that stretch reads VATIGITEYA…YEKAWMVKVE (83 aa). Lys-63 bears the N6-lipoyllysine mark.

Belongs to the GcvH family. As to quaternary structure, the glycine cleavage system is composed of four proteins: P, T, L and H. Requires (R)-lipoate as cofactor.

In terms of biological role, the glycine cleavage system catalyzes the degradation of glycine. The H protein shuttles the methylamine group of glycine from the P protein to the T protein. Functionally, is also involved in protein lipoylation via its role as an octanoyl/lipoyl carrier protein intermediate. This Staphylococcus aureus (strain MSSA476) protein is Glycine cleavage system H protein.